We begin with the raw amino-acid sequence, 684 residues long: Homoaconitase, mitochondrial (684 aa).

[4Fe-4S] cluster is bound by residues C337, C397, and C400.

Belongs to the aconitase/IPM isomerase family. Requires [4Fe-4S] cluster as cofactor.

Its subcellular location is the mitochondrion. The enzyme catalyses (2R,3S)-homoisocitrate = cis-homoaconitate + H2O. It participates in amino-acid biosynthesis; L-lysine biosynthesis via AAA pathway; L-alpha-aminoadipate from 2-oxoglutarate: step 3/5. Its function is as follows. Catalyzes the reversible hydration of cis-homoaconitate to (2R,3S)-homoisocitrate, a step in the alpha-aminoadipate pathway for lysine biosynthesis. This chain is Homoaconitase, mitochondrial (LYS4), found in Candida albicans (strain SC5314 / ATCC MYA-2876) (Yeast).